A 941-amino-acid polypeptide reads, in one-letter code: ATP-dependent 6-phosphofructokinase subunit beta (941 aa).

An N-terminal catalytic PFK domain 1 region spans residues 2–558; the sequence is PDASLFNGTS…HMKNFISTNS (557 aa). Residues G191, 255–256, and 285–288 each bind ATP; these read RC and GDGS. D286 serves as a coordination point for Mg(2+). Beta-D-fructose 6-phosphate contacts are provided by residues 331–333, R368, 375–377, E432, R460, and 466–469; these read SID, MGR, and HVQR. The active-site Proton acceptor is the D333. An interdomain linker region spans residues 559–572; that stretch reads ADHVPPSLPLEKRK. The segment at 573 to 941 is C-terminal regulatory PFK domain 2; sequence KVAIINVGAP…SDMLSGRTSL (369 aa). Residues R643, 701–705, R739, 746–748, E806, K832, 838–841, and R918 contribute to the beta-D-fructose 2,6-bisphosphate site; these read TISNN, QGG, and HVQQ.

Belongs to the phosphofructokinase type A (PFKA) family. ATP-dependent PFK group I subfamily. Eukaryotic two domain clade 'E' sub-subfamily. As to quaternary structure, heterododecamer of 4 alpha, 4 beta and 4 gamma chains. The gamma chain bridges the N-terminal halves of the alpha and beta subunits. Requires Mg(2+) as cofactor.

It localises to the cytoplasm. The enzyme catalyses beta-D-fructose 6-phosphate + ATP = beta-D-fructose 1,6-bisphosphate + ADP + H(+). The protein operates within carbohydrate degradation; glycolysis; D-glyceraldehyde 3-phosphate and glycerone phosphate from D-glucose: step 3/4. Its activity is regulated as follows. Allosterically activated by ADP, AMP, or fructose 2,6-bisphosphate, and allosterically inhibited by ATP or citrate. Its function is as follows. Catalyzes the phosphorylation of D-fructose 6-phosphate to fructose 1,6-bisphosphate by ATP, the first committing step of glycolysis. This Komagataella phaffii (strain GS115 / ATCC 20864) (Yeast) protein is ATP-dependent 6-phosphofructokinase subunit beta (PFK2).